A 343-amino-acid chain; its full sequence is 3-keto-steroid reductase (343 aa).

NADP(+)-binding residues include Leu-19 and Thr-42. Active-site proton donor residues include Ser-180 and Tyr-203. 3 residues coordinate NADP(+): Tyr-203, Lys-207, and Ser-239. Lys-207 serves as the catalytic Lowers pKa of active site Tyr.

Belongs to the short-chain dehydrogenases/reductases (SDR) family. ERG27 subfamily.

It carries out the reaction a 3beta-hydroxysteroid + NADP(+) = a 3-oxosteroid + NADPH + H(+). It participates in steroid biosynthesis; zymosterol biosynthesis; zymosterol from lanosterol: step 5/6. Responsible for the reduction of the keto group on the C-3 of sterols. The chain is 3-keto-steroid reductase (ERG27) from Yarrowia lipolytica (strain CLIB 122 / E 150) (Yeast).